Here is a 595-residue protein sequence, read N- to C-terminus: Flap endonuclease 1 (595 aa).

The segment at 1–106 is N-domain; that stretch reads MGIKGLTKFI…SELEKRGEKR (106 aa). Asp34 is a binding site for Mg(2+). Residues Arg47 and Arg72 each contribute to the DNA site. Residues Asp88, Glu160, Glu162, Asp181, and Asp183 each coordinate Mg(2+). The segment at 124 to 267 is I-domain; that stretch reads EIKKQSGRTV…KTAYNLIKEY (144 aa). Glu160 is a DNA binding site. DNA is bound by residues Gly245 and Asp247. Asp247 serves as a coordination point for Mg(2+). Residues 350 to 358 form an interaction with PCNA region; sequence TQRRLDNFF. The disordered stretch occupies residues 370–493; that stretch reads NEESQIKKEV…TGDVYSFPNG (124 aa). Positions 392–401 are enriched in polar residues; it reads NDSSTKLNSK. Positions 406–425 are enriched in basic and acidic residues; it reads PKGEKESKTEKDDGDTHNGN. Residues 426-436 show a composition bias toward acidic residues; that stretch reads DNEEEGGEGET. A compositionally biased stretch (basic and acidic residues) spans 461–475; it reads HKSDSESGNVKKEST.

This sequence belongs to the XPG/RAD2 endonuclease family. FEN1 subfamily. As to quaternary structure, interacts with PCNA. Three molecules of FEN1 bind to one PCNA trimer with each molecule binding to one PCNA monomer. PCNA stimulates the nuclease activity without altering cleavage specificity. Mg(2+) serves as cofactor. In terms of processing, phosphorylated. Phosphorylation upon DNA damage induces relocalization to the nuclear plasma.

It localises to the nucleus. It is found in the nucleolus. The protein resides in the nucleoplasm. Its subcellular location is the mitochondrion. Functionally, structure-specific nuclease with 5'-flap endonuclease and 5'-3' exonuclease activities involved in DNA replication and repair. During DNA replication, cleaves the 5'-overhanging flap structure that is generated by displacement synthesis when DNA polymerase encounters the 5'-end of a downstream Okazaki fragment. It enters the flap from the 5'-end and then tracks to cleave the flap base, leaving a nick for ligation. Also involved in the long patch base excision repair (LP-BER) pathway, by cleaving within the apurinic/apyrimidinic (AP) site-terminated flap. Acts as a genome stabilization factor that prevents flaps from equilibrating into structures that lead to duplications and deletions. Also possesses 5'-3' exonuclease activity on nicked or gapped double-stranded DNA, and exhibits RNase H activity. Also involved in replication and repair of rDNA and in repairing mitochondrial DNA. This is Flap endonuclease 1 from Plasmodium knowlesi (strain H).